The chain runs to 608 residues: Tectonic-3 (608 aa).

Residues 1–22 (MRTPQLALLQVFLLMFPDGVRP) form the signal peptide. The disordered stretch occupies residues 23–58 (QPSSSPSGAVPTSLDLQPGTVGGTLQSSSEATATRP). The Extracellular portion of the chain corresponds to 23-586 (QPSSSPSGAV…AFSRGVSSQK (564 aa)). Residues 45 to 54 (GTLQSSSEAT) are compositionally biased toward polar residues. N-linked (GlcNAc...) asparagine glycans are attached at residues N78, N179, and N347. The helical transmembrane segment at 587–607 (CSVSPVLILCLLLLGVLNLET) threads the bilayer. A topological domain (cytoplasmic) is located at residue T608.

Belongs to the tectonic family. In terms of assembly, part of the tectonic-like complex (also named B9 complex).

It localises to the membrane. Part of the tectonic-like complex which is required for tissue-specific ciliogenesis and may regulate ciliary membrane composition. May be involved in apoptosis regulation. Necessary for signal transduction through the sonic hedgehog (Shh) signaling pathway. The polypeptide is Tectonic-3 (TCTN3) (Macaca fascicularis (Crab-eating macaque)).